The sequence spans 541 residues: Chaperonin GroEL 2 (541 aa).

ATP contacts are provided by residues Thr-29–Pro-32, Asp-86–Thr-90, Gly-413, Asn-476–Ala-478, and Asp-492.

Belongs to the chaperonin (HSP60) family. Forms a cylinder of 14 subunits composed of two heptameric rings stacked back-to-back. Interacts with the co-chaperonin GroES.

The protein localises to the secreted. Its subcellular location is the capsule. It localises to the cell surface. The protein resides in the cell wall. The enzyme catalyses ATP + H2O + a folded polypeptide = ADP + phosphate + an unfolded polypeptide.. Functionally, together with its co-chaperonin GroES, plays an essential role in assisting protein folding. The GroEL-GroES system forms a nano-cage that allows encapsulation of the non-native substrate proteins and provides a physical environment optimized to promote and accelerate protein folding. This is Chaperonin GroEL 2 from Mycolicibacterium gilvum (strain PYR-GCK) (Mycobacterium gilvum (strain PYR-GCK)).